The chain runs to 453 residues: GTPase Der (453 aa).

2 EngA-type G domains span residues Pro4 to Thr169 and Ile177 to Lys352. Residues Gly10 to Ser17, Asp57 to Leu61, Asn120 to Glu123, Gly183 to Ser190, Asp230 to Ile234, and Asn295 to Asp298 contribute to the GTP site. In terms of domain architecture, KH-like spans Arg353–Lys438.

Belongs to the TRAFAC class TrmE-Era-EngA-EngB-Septin-like GTPase superfamily. EngA (Der) GTPase family. As to quaternary structure, associates with the 50S ribosomal subunit.

GTPase that plays an essential role in the late steps of ribosome biogenesis. The polypeptide is GTPase Der (Nostoc sp. (strain PCC 7120 / SAG 25.82 / UTEX 2576)).